Consider the following 533-residue polypeptide: Dipeptidase (533 aa).

Cys3 is a catalytic residue.

It belongs to the peptidase C69 family.

The catalysed reaction is an L-aminoacyl-L-amino acid + H2O = 2 an L-alpha-amino acid. Its function is as follows. Hydrolyzes a wide range of dipeptides. Highest activity against Ala-Gln. The sequence is that of Dipeptidase from Bifidobacterium longum (strain NCC 2705).